The chain runs to 238 residues: tRNA (guanine-N(7)-)-methyltransferase (238 aa).

Residues Glu-68, Glu-93, Asp-120, and Asp-143 each contribute to the S-adenosyl-L-methionine site. The active site involves Asp-143. Substrate is bound by residues Lys-147, Asp-179, and 216 to 219; that span reads TKFE.

Belongs to the class I-like SAM-binding methyltransferase superfamily. TrmB family.

The catalysed reaction is guanosine(46) in tRNA + S-adenosyl-L-methionine = N(7)-methylguanosine(46) in tRNA + S-adenosyl-L-homocysteine. It functions in the pathway tRNA modification; N(7)-methylguanine-tRNA biosynthesis. Its function is as follows. Catalyzes the formation of N(7)-methylguanine at position 46 (m7G46) in tRNA. This is tRNA (guanine-N(7)-)-methyltransferase from Shewanella baltica (strain OS223).